A 396-amino-acid polypeptide reads, in one-letter code: 1-deoxy-D-xylulose 5-phosphate reductoisomerase (396 aa).

NADPH is bound by residues Thr-10, Gly-11, Ser-12, Ile-13, and Asn-123. Lys-124 contacts 1-deoxy-D-xylulose 5-phosphate. Glu-125 is a binding site for NADPH. Position 149 (Asp-149) interacts with Mn(2+). 4 residues coordinate 1-deoxy-D-xylulose 5-phosphate: Ser-150, Glu-151, Ser-185, and His-208. Glu-151 is a Mn(2+) binding site. Gly-214 contributes to the NADPH binding site. Residues Ser-221, Asn-226, Lys-227, and Glu-230 each coordinate 1-deoxy-D-xylulose 5-phosphate. Glu-230 lines the Mn(2+) pocket.

Belongs to the DXR family. Mg(2+) is required as a cofactor. Requires Mn(2+) as cofactor.

The enzyme catalyses 2-C-methyl-D-erythritol 4-phosphate + NADP(+) = 1-deoxy-D-xylulose 5-phosphate + NADPH + H(+). The protein operates within isoprenoid biosynthesis; isopentenyl diphosphate biosynthesis via DXP pathway; isopentenyl diphosphate from 1-deoxy-D-xylulose 5-phosphate: step 1/6. In terms of biological role, catalyzes the NADPH-dependent rearrangement and reduction of 1-deoxy-D-xylulose-5-phosphate (DXP) to 2-C-methyl-D-erythritol 4-phosphate (MEP). The sequence is that of 1-deoxy-D-xylulose 5-phosphate reductoisomerase from Shewanella frigidimarina (strain NCIMB 400).